The primary structure comprises 283 residues: MGAISLDGKTTRDEIFVDLKERVAALTAAGRTPGLGTVLVGDDPGSQAYVRGKHADCAKVGINSIRRDLPADITTEQLNETIDELNANPDCTGYIVQLPLPKHLDENAALERIDPAKDADGLHPTNLGRLVLGKQAALPCTPRGIVHLLRRFDVPIAGAHVVVIGRGVTVGRPMGLLLTRRSENATVTLCHTGTRDLPALTRQADIIIAAVGVPHMVTADMVKPGAAVVDVGVSRVDGKLTGDVAPDVWEVAGHVSPNPGGVGPLTRAFLLTNVVEAEESKLA.

NADP(+) is bound by residues 165 to 167 (GRG), Thr192, and Val233.

The protein belongs to the tetrahydrofolate dehydrogenase/cyclohydrolase family. Homodimer.

The catalysed reaction is (6R)-5,10-methylene-5,6,7,8-tetrahydrofolate + NADP(+) = (6R)-5,10-methenyltetrahydrofolate + NADPH. It carries out the reaction (6R)-5,10-methenyltetrahydrofolate + H2O = (6R)-10-formyltetrahydrofolate + H(+). It participates in one-carbon metabolism; tetrahydrofolate interconversion. Functionally, catalyzes the oxidation of 5,10-methylenetetrahydrofolate to 5,10-methenyltetrahydrofolate and then the hydrolysis of 5,10-methenyltetrahydrofolate to 10-formyltetrahydrofolate. This Mycolicibacterium smegmatis (strain ATCC 700084 / mc(2)155) (Mycobacterium smegmatis) protein is Bifunctional protein FolD.